Here is a 170-residue protein sequence, read N- to C-terminus: RxLR effector protein CRE16 (170 aa).

Residues 1–23 (MSKLFYAFAVLAVHVLTSSPTTA) form the signal peptide. The RxLR-dEER signature appears at 47–68 (RFLRSIHEGEDSLKPSAFSEER).

The protein belongs to the RxLR effector family.

The protein resides in the secreted. It localises to the host cytoplasm. Its subcellular location is the host nucleus. Functionally, effector that is involved in host plant infection. Contributes to virulence during the early infection stage, by inhibiting plant defense responses induced by both PAMP-triggered immunity (PTI) and effector-triggered immunity (ETI). The sequence is that of RxLR effector protein CRE16 from Phytophthora infestans (strain T30-4) (Potato late blight agent).